The following is a 383-amino-acid chain: Na(+)/H(+) antiporter NhaA (383 aa).

The next 11 helical transmembrane spans lie at 21–41 (AAGVMLMAASAIGMVFANSIW), 56–76 (LTMRGWINDALMALFFLLAGL), 94–114 (LLPGVAAIGGMVVPAIIYVAF), 123–143 (GWAIPTATDIAFALGVLALAG), 152–172 (VFLTALAIVDDLGAVIVIALF), 175–195 (GTLSVLPGAGVAAILGLLLML), 202–222 (TLFPYLLAGVPLWWLTLKSGI), 258–278 (FVILPLFGFANAGISLHGVTV), 287–307 (LGVGAALMLGKPLGVLGAVSI), 326–346 (IGIAFLCGIGFTMSLFIAILA), and 355–375 (QIKLGILSGSMLSGLCGYILL).

This sequence belongs to the NhaA Na(+)/H(+) (TC 2.A.33) antiporter family.

It is found in the cell inner membrane. It catalyses the reaction Na(+)(in) + 2 H(+)(out) = Na(+)(out) + 2 H(+)(in). In terms of biological role, na(+)/H(+) antiporter that extrudes sodium in exchange for external protons. This chain is Na(+)/H(+) antiporter NhaA, found in Granulibacter bethesdensis (strain ATCC BAA-1260 / CGDNIH1).